A 384-amino-acid polypeptide reads, in one-letter code: Sphingosine 1-phosphate receptor 3 (384 aa).

Over 1-34 the chain is Extracellular; sequence MMINPLIYLHYNYTGKLDHRPTVGTSPGTRDPKT. Asn12 carries an N-linked (GlcNAc...) asparagine glycan. Residues 35 to 55 traverse the membrane as a helical segment; the sequence is IAFLVVCSFIILENLTVLLAI. The Cytoplasmic segment spans residues 56–64; the sequence is WKNHRFHNR. A helical transmembrane segment spans residues 65–85; the sequence is MYFFIGNLALCDLLASVAYLV. Over 86–105 the chain is Extracellular; that stretch reads NLLLSGEKTLQLSPVLWFVR. Residues 106 to 126 form a helical membrane-spanning segment; that stretch reads EGSMFVTLGASIFSLLAIAIE. Topologically, residues 127-144 are cytoplasmic; the sequence is RHLTMIKMRPYDASKNYR. A helical membrane pass occupies residues 145–165; it reads VFLLIGTCWLVAVLLGALPIL. At 166-186 the chain is on the extracellular side; that stretch reads GWNCLGNLPDCSTILPLYTKK. The helical transmembrane segment at 187–207 threads the bilayer; sequence YVAFCIIVFIVLLLAMSVLYA. The Cytoplasmic portion of the chain corresponds to 208–235; sequence RIYILVKSSSQKVSKHRNSEHAMSLLRT. The chain crosses the membrane as a helical span at residues 236–256; sequence VIIVVGVFIACWMPIFVLLLL. Residues 257–271 lie on the Extracellular side of the membrane; sequence DVACERPCPILYKAD. A helical transmembrane segment spans residues 272–292; that stretch reads WFIAVAVLNSAMNPIIYTLAS. The Cytoplasmic portion of the chain corresponds to 293–384; the sequence is REMRRAFLGL…REGEGGNGGR (92 aa). Composition is skewed to polar residues over residues 315–325 and 336–347; these read NDSGNKQFQEP and QTHPNQSQQSSR. Residues 315 to 384 form a disordered region; the sequence is NDSGNKQFQE…REGEGGNGGR (70 aa). The span at 349–359 shows a compositional bias: basic and acidic residues; that stretch reads AELDREQETGH.

Belongs to the G-protein coupled receptor 1 family.

The protein resides in the cell membrane. Functionally, receptor for the lysosphingolipid sphingosine 1-phosphate (S1P). The protein is Sphingosine 1-phosphate receptor 3 (s1pr3) of Takifugu rubripes (Japanese pufferfish).